We begin with the raw amino-acid sequence, 524 residues long: Lysophospholipid acyltransferase LPCAT4 (524 aa).

2 helical membrane-spanning segments follow: residues 40 to 62 and 87 to 107; these read CLLG…FLLW and TVCH…LGFL. The HXXXXD motif signature appears at 129 to 134; the sequence is HSTFFD. N-linked (GlcNAc...) asparagine glycosylation occurs at N152. The interval 490-524 is disordered; sequence PHKPRSTSQIPNASSPSSPTALANGTVQAPKQKGD. Residues 495–518 are compositionally biased toward polar residues; it reads STSQIPNASSPSSPTALANGTVQA.

It belongs to the 1-acyl-sn-glycerol-3-phosphate acyltransferase family. In terms of tissue distribution, widely expressed with much higher level in brain. Expressed in erythroleukemic cells but not in reticulocytes.

The protein resides in the endoplasmic reticulum membrane. The enzyme catalyses a 1-acyl-sn-glycero-3-phosphoethanolamine + an acyl-CoA = a 1,2-diacyl-sn-glycero-3-phosphoethanolamine + CoA. The catalysed reaction is a 1-O-(1Z-alkenyl)-sn-glycero-3-phosphoethanolamine + an acyl-CoA = a 1-O-(1Z-alkenyl)-2-acyl-sn-glycero-3-phosphoethanolamine + CoA. It catalyses the reaction a 1-acyl-sn-glycero-3-phosphocholine + an acyl-CoA = a 1,2-diacyl-sn-glycero-3-phosphocholine + CoA. It carries out the reaction a 1-O-alkyl-sn-glycero-3-phosphocholine + acetyl-CoA = a 1-O-alkyl-2-acetyl-sn-glycero-3-phosphocholine + CoA. The enzyme catalyses a 1-acyl-sn-glycero-3-phospho-L-serine + an acyl-CoA = a 1,2-diacyl-sn-glycero-3-phospho-L-serine + CoA. The catalysed reaction is octanoyl-CoA + a 1-acyl-sn-glycero-3-phosphoethanolamine = 1-acyl-2-octanoyl-sn-glycero-3-phosphoethanolamine + CoA. It catalyses the reaction a 1-acyl-sn-glycero-3-phosphoethanolamine + hexadecanoyl-CoA = 1-acyl-2-hexadecanoyl-sn-glycero-3-phosphoethanolamine + CoA. It carries out the reaction a 1-acyl-sn-glycero-3-phosphoethanolamine + octadecanoyl-CoA = 1-acyl-2-octadecanoyl-sn-glycero-3-phosphoethanolamine + CoA. The enzyme catalyses a 1-acyl-sn-glycero-3-phosphoethanolamine + (9Z)-octadecenoyl-CoA = 1-acyl-2-(9Z)-octadecenoyl-sn-glycero-3-phosphoethanolamine + CoA. The catalysed reaction is a 1-acyl-sn-glycero-3-phosphoethanolamine + (5Z,8Z,11Z,14Z)-eicosatetraenoyl-CoA = 1-acyl-2-(5Z,8Z,11Z,14Z)-eicosatetraenoyl-sn-glycero-3-phosphoethanolamine + CoA. It catalyses the reaction a 1-O-(1Z-alkenyl)-sn-glycero-3-phosphoethanolamine + octanoyl-CoA = 1-O-(1Z)-alkenyl-2-octanoyl-sn-glycero-3-phosphoethanolamine + CoA. It carries out the reaction a 1-O-(1Z-alkenyl)-sn-glycero-3-phosphoethanolamine + hexadecanoyl-CoA = 1-O-(1Z)-alkenyl-2-hexadecanoyl-sn-glycero-3-phosphoethanolamine + CoA. The enzyme catalyses a 1-O-(1Z-alkenyl)-sn-glycero-3-phosphoethanolamine + octadecanoyl-CoA = 1-O-(1Z)-alkenyl-2-octadecanoyl-sn-glycero-3-phosphoethanolamine + CoA. The catalysed reaction is a 1-O-(1Z-alkenyl)-sn-glycero-3-phosphoethanolamine + (9Z)-octadecenoyl-CoA = 1-O-(1Z)-alkenyl-2-(9Z)-octadecenoyl-sn-glycero-3-phosphoethanolamine + CoA. It catalyses the reaction a 1-O-(1Z-alkenyl)-sn-glycero-3-phosphoethanolamine + (5Z,8Z,11Z,14Z)-eicosatetraenoyl-CoA = 1-O-(1Z)-alkenyl-2-(5Z,8Z,11Z,14Z)-eicosatetraenoyl-sn-glycero-3-phosphoethanolamine + CoA. It carries out the reaction a 1-acyl-sn-glycero-3-phosphocholine + hexadecanoyl-CoA = 1-acyl-2-hexadecanoyl-sn-glycero-3-phosphocholine + CoA. The enzyme catalyses a 1-acyl-sn-glycero-3-phosphocholine + (9Z)-octadecenoyl-CoA = a 1-acyl-2-(9Z)-octadecenoyl-sn-glycero-3-phosphocholine + CoA. The catalysed reaction is 1-O-hexadecyl-sn-glycero-3-phosphocholine + (9Z)-octadecenoyl-CoA = 1-O-hexadecyl-2-(9Z)-octadecenoyl-sn-glycero-3-phosphocholine + CoA. It catalyses the reaction 1-O-hexadecyl-sn-glycero-3-phosphocholine + (5Z,8Z,11Z,14Z)-eicosatetraenoyl-CoA = 1-O-hexadecyl-2-(5Z,8Z,11Z,14Z)-eicosatetraenoyl-sn-glycero-3-phosphocholine + CoA. It carries out the reaction 1-hexadecanoyl-sn-glycero-3-phospho-L-serine + (9Z)-octadecenoyl-CoA = 1-hexadecanoyl-2-(9Z-octadecenoyl)-sn-glycero-3-phospho-L-serine + CoA. The enzyme catalyses 1-octadecanoyl-sn-glycero-3-phospho-(1'-sn-glycerol) + (9Z)-octadecenoyl-CoA = 1-octadecanoyl-2-(9Z-octadecenoyl)-sn-glycero-3-phospho-(1'-sn-glycerol) + CoA. The catalysed reaction is 1-octadecanoyl-sn-glycero-3-phospho-(1'-sn-glycerol) + (5Z,8Z,11Z,14Z)-eicosatetraenoyl-CoA = 1-octadecanoyl-2-(5Z,8Z,11Z,14Z-eicosatetraenoyl)-sn-glycero-3-phospho-(1'-sn-glycerol) + CoA. It functions in the pathway lipid metabolism; phospholipid metabolism. Displays acyl-CoA-dependent lysophospholipid acyltransferase activity with a subset of lysophospholipids as substrates; converts lysophosphatidylethanolamine to phosphatidylethanolamine, 1-alkenyl-lysophatidylethanolamine to 1-alkenyl-phosphatidylethanolamine, lysophosphatidylglycerol and alkyl-lysophosphatidylcholine to phosphatidylglycerol and alkyl-phosphatidylcholine, respectively. In contrast, has no lysophosphatidylinositol, glycerol-3-phosphate, diacylglycerol or lysophosphatidic acid acyltransferase activity. Prefers long chain acyl-CoAs (C16, C18) as acyl donors. Converts lysophosphatidylcholine to phosphatidycholine. This is Lysophospholipid acyltransferase LPCAT4 (Lpcat4) from Mus musculus (Mouse).